A 328-amino-acid chain; its full sequence is RING finger protein 175 (328 aa).

Helical transmembrane passes span 51–71 (MHVE…IVLV), 83–103 (LVTL…LYWW), 104–121 (RFLS…YILF), 149–169 (AFGV…NLFF), and 180–200 (GIVS…FAEI). The RING-type; atypical zinc finger occupies 227–277 (CAVCGQKIIVELDEEGLIENTYQLSCNHVFHEFCIRGWCIVGKKQTCPYCK).

The protein resides in the membrane. The chain is RING finger protein 175 (RNF175) from Homo sapiens (Human).